The sequence spans 78 residues: DNA-directed RNA polymerase subunit omega (78 aa).

The protein belongs to the RNA polymerase subunit omega family. In cyanobacteria the RNAP catalytic core is composed of 2 alpha, 1 beta, 1 beta', 1 gamma and 1 omega subunit. When a sigma factor is associated with the core the holoenzyme is formed, which can initiate transcription.

The enzyme catalyses RNA(n) + a ribonucleoside 5'-triphosphate = RNA(n+1) + diphosphate. Promotes RNA polymerase assembly. Latches the N- and C-terminal regions of the beta' subunit thereby facilitating its interaction with the beta and alpha subunits. The polypeptide is DNA-directed RNA polymerase subunit omega (Prochlorococcus marinus (strain MIT 9312)).